The following is a 261-amino-acid chain: MYDDLKGKTVVVTGSSKGLGAAMARRFGAEGMNVVANYRSDEEGARETVRAIEEAGGAAAAVQADVSKNECVDALFDAAMFSFGGVDIWVNNAGIEVASPSDRKSIEEWQRVIDVNLTGVFAGCRRAIDHFLDRKMPGVIINLSSVHEIIPWPHFADYAASKAGVGMLTKTLALEYADRGIRVNAIAPGAMNTPINAEKFADPEARAATERLIPMGYVGAPEDVAAAAAWLASDQASYVTGTTLFVDGGMTLYPGFQFGQG.

Residues 65 to 66 (DV), Asn-92, Tyr-158, and Lys-162 contribute to the NAD(+) site. Tyr-158 (proton acceptor) is an active-site residue.

Belongs to the short-chain dehydrogenases/reductases (SDR) family.

It catalyses the reaction 3-oxo-5beta-cholan-24-oate + NADH + H(+) = isolithocholate + NAD(+). It carries out the reaction 12alpha-hydroxy-3-oxo-5beta-cholan-24-oate + NADH + H(+) = isodeoxycholate + NAD(+). The enzyme catalyses 7alpha,12alpha-dihydroxy-3-oxo-5beta-cholan-24-oate + NADH + H(+) = isocholate + NAD(+). The catalysed reaction is 3-oxochenodeoxycholate + NADH + H(+) = isochenodeoxycholate + NAD(+). Its function is as follows. Involved in the modification of secondary bile acids into iso-bile acids (3beta-bile acids) via epimerization of the 3-OH group through a 3-oxo-intermediate. Catalyzes the reduction of 12-alpha-hydroxy-3-oxo-5-beta-cholan-24-oate (3-oxo-DCA) and 3-oxo-5-beta-cholan-24-oate (3-oxo-LCA) to yield isodeoxycholate (isoDCA) and isolithocholate (isoLCA), respectively. Is also able to catalyze the reduction of 3-dehydrocholate (3-oxo-CA or 7alpha,12alpha-dihydroxy-3-oxo-5beta-cholan-24-oate) and 7-alpha-hydroxy-3-oxo-5-beta-cholan-24-oate (3-oxo-CDCA), into isocholate (isoCA) and isochenodeoxycholate (isoCDCA), respectively. Prefers NADH to NADPH as cosubstrate. The conversion of the abundant bile acid deoxycholate (DCA) into isoDCA by the gut bacterium E.lenta favors the growth of the keystone commensal genus Bacteroides, since isoDCA is less cytotoxic than its parent compound, DCA; iso-bile acids have thus a potential role in modulating gut community composition. This Eggerthella lenta (strain ATCC 25559 / DSM 2243 / CCUG 17323 / JCM 9979 / KCTC 3265 / NCTC 11813 / VPI 0255 / 1899 B) (Eubacterium lentum) protein is 3beta-hydroxysteroid dehydrogenase 1.